We begin with the raw amino-acid sequence, 88 residues long: Small ribosomal subunit protein uS15 (88 aa).

The protein belongs to the universal ribosomal protein uS15 family. Part of the 30S ribosomal subunit. Forms a bridge to the 50S subunit in the 70S ribosome, contacting the 23S rRNA.

Its function is as follows. One of the primary rRNA binding proteins, it binds directly to 16S rRNA where it helps nucleate assembly of the platform of the 30S subunit by binding and bridging several RNA helices of the 16S rRNA. Forms an intersubunit bridge (bridge B4) with the 23S rRNA of the 50S subunit in the ribosome. This is Small ribosomal subunit protein uS15 from Mesomycoplasma flocculare (Mycoplasma flocculare).